The following is a 624-amino-acid chain: Na(+)/H(+) antiporter NhaA (624 aa).

Residues 1-164 (MNPELPPNHL…TFFINGRRYD (164 aa)) form a unknown region. The na(+)/H(+) antiporter NhaA stretch occupies residues 165–624 (GPWDVRSLSE…NAQAEEEKNP (460 aa)). Transmembrane regions (helical) follow at residues 199 to 219 (GIML…ALGP), 240 to 260 (LSLR…VVGL), 279 to 299 (LPIA…LILV), 319 to 339 (GWGV…AMMG), 348 to 368 (VFLT…VAIF), 371 to 391 (GELH…LALL), 407 to 427 (IVLW…GIIL), 497 to 517 (FLVL…TSVF), 521 to 541 (IPLM…GFIT), 565 to 585 (GAGA…SQAF), and 596 to 616 (IAIF…LWNA).

The protein belongs to the NhaA Na(+)/H(+) (TC 2.A.33) antiporter family.

It localises to the cell inner membrane. The enzyme catalyses Na(+)(in) + 2 H(+)(out) = Na(+)(out) + 2 H(+)(in). Its function is as follows. Na(+)/H(+) antiporter that extrudes sodium in exchange for external protons. The chain is Na(+)/H(+) antiporter NhaA from Nitrosospira multiformis (strain ATCC 25196 / NCIMB 11849 / C 71).